Consider the following 387-residue polypeptide: MSADRVPTYSVGELNTAIGSLLERGFAPRFLLEATVSRPQVKKGHLWLTLTDGTASISGVVWASRLAQLSYRPTDGDGVTVVGKLNFWAARASITVQALDIRPSLSTVLRQFEQVRQRLEDEGVINPGRQRSLPSQPATLALLTSVPSSALADMLRTGRERWPMTRLLVIPIPVQGAVADQIIKVLNRLAERCEALAVDGLVLARGGGSREDLAVFDDEALCRCLAQFPRPVVTGIGHEDDLTIADLVADHRAATPTAAMVACLPDRDSAKRNLQDRRQRMKDVVGWRIERDRQRLNDRRAFLRQQSPLRRLQQLQDDLNRKRDLLRALSPSRWLQRGLALLSNDAGETLSGVTSIKVGDRVVIQMNDGELDTDVKVVRPSSHQSMS.

The protein belongs to the XseA family. In terms of assembly, heterooligomer composed of large and small subunits.

The protein resides in the cytoplasm. It catalyses the reaction Exonucleolytic cleavage in either 5'- to 3'- or 3'- to 5'-direction to yield nucleoside 5'-phosphates.. In terms of biological role, bidirectionally degrades single-stranded DNA into large acid-insoluble oligonucleotides, which are then degraded further into small acid-soluble oligonucleotides. This is Exodeoxyribonuclease 7 large subunit from Synechococcus sp. (strain CC9902).